The chain runs to 1155 residues: Protein BREAST CANCER SUSCEPTIBILITY 2 homolog B (1155 aa).

4 BRCA2 repeats span residues 63–97 (MPGE…ENVA), 116–150 (TAET…SDMI), 163–197 (FGVP…LEED), and 257–291 (LKVP…DPEL).

As to quaternary structure, interacts with RAD51 and DMC1. Interacts with DSS1(I) and DSS1(V). Can interact with both RAD51 and DSS1(I) or both DMC1 and DSS1(I) in a tripartite complex. As to expression, expressed in flower buds.

Involved in double-strand break repair and/or homologous recombination by mediating RAD51- and DMC1-facilitated DNA repair. Plays an essential role in both somatic and meiotic homologous recombination. Is crucial for the formation of RAD51 and DMC1 foci during male meiotic homologous recombination in prophase I. In Arabidopsis thaliana (Mouse-ear cress), this protein is Protein BREAST CANCER SUSCEPTIBILITY 2 homolog B.